Here is a 419-residue protein sequence, read N- to C-terminus: Serine--tRNA ligase (419 aa).

226 to 228 (TSE) serves as a coordination point for L-serine. Residues 257–259 (RRE) and V273 each bind ATP. E280 is an L-serine binding site. 344–347 (ELTS) is a binding site for ATP. An L-serine-binding site is contributed by T379.

The protein belongs to the class-II aminoacyl-tRNA synthetase family. Type-1 seryl-tRNA synthetase subfamily. Homodimer. The tRNA molecule binds across the dimer.

Its subcellular location is the cytoplasm. The enzyme catalyses tRNA(Ser) + L-serine + ATP = L-seryl-tRNA(Ser) + AMP + diphosphate + H(+). It carries out the reaction tRNA(Sec) + L-serine + ATP = L-seryl-tRNA(Sec) + AMP + diphosphate + H(+). Its pathway is aminoacyl-tRNA biosynthesis; selenocysteinyl-tRNA(Sec) biosynthesis; L-seryl-tRNA(Sec) from L-serine and tRNA(Sec): step 1/1. Functionally, catalyzes the attachment of serine to tRNA(Ser). Is also able to aminoacylate tRNA(Sec) with serine, to form the misacylated tRNA L-seryl-tRNA(Sec), which will be further converted into selenocysteinyl-tRNA(Sec). The sequence is that of Serine--tRNA ligase from Mycobacterium marinum (strain ATCC BAA-535 / M).